The following is a 194-amino-acid chain: HTH-type transcriptional regulator BetI (194 aa).

Positions 8-68 constitute an HTH tetR-type domain; sequence PLRRRELIDA…ATMRHLLREL (61 aa). Residues 31–50 constitute a DNA-binding region (H-T-H motif); the sequence is TVAQIAHEAGVSPALAHHYF.

It functions in the pathway amine and polyamine biosynthesis; betaine biosynthesis via choline pathway [regulation]. Repressor involved in the biosynthesis of the osmoprotectant glycine betaine. It represses transcription of the choline transporter BetT and the genes of BetAB involved in the synthesis of glycine betaine. This is HTH-type transcriptional regulator BetI from Brucella anthropi (strain ATCC 49188 / DSM 6882 / CCUG 24695 / JCM 21032 / LMG 3331 / NBRC 15819 / NCTC 12168 / Alc 37) (Ochrobactrum anthropi).